Consider the following 417-residue polypeptide: Senescence-associated protein AAF, chloroplastic (417 aa).

The N-terminal 36 residues, 1–36 (MALNVSKVVPNSPILVKSVNASRSRRVLLAYVHHPL), are a transit peptide targeting the chloroplast.

It belongs to the ATA15/OSA15 family. As to expression, expressed in leaves. Expressed in 7-day-old seedlings, roots, rosette leaves, cauline leaves and flower buds.

It localises to the plastid. It is found in the chloroplast. Its function is as follows. Involved in modulation of redox homeostasis to regulate leaf senescence mediated by age and stress factors during plant development. Its function is dependent of EIN2, a central factor of ethylene signaling. The sequence is that of Senescence-associated protein AAF, chloroplastic from Arabidopsis thaliana (Mouse-ear cress).